A 203-amino-acid chain; its full sequence is Glycerol-3-phosphate acyltransferase (203 aa).

The next 5 helical transmembrane spans lie at 10–30 (MLIL…GLIL), 59–79 (GAAA…VLLA), 87–107 (AAQV…WLGF), 116–136 (FLGL…LSWL), and 160–180 (LVLL…LMVF).

This sequence belongs to the PlsY family. In terms of assembly, probably interacts with PlsX.

The protein localises to the cell inner membrane. The enzyme catalyses an acyl phosphate + sn-glycerol 3-phosphate = a 1-acyl-sn-glycero-3-phosphate + phosphate. Its pathway is lipid metabolism; phospholipid metabolism. In terms of biological role, catalyzes the transfer of an acyl group from acyl-phosphate (acyl-PO(4)) to glycerol-3-phosphate (G3P) to form lysophosphatidic acid (LPA). This enzyme utilizes acyl-phosphate as fatty acyl donor, but not acyl-CoA or acyl-ACP. The polypeptide is Glycerol-3-phosphate acyltransferase (Ruegeria pomeroyi (strain ATCC 700808 / DSM 15171 / DSS-3) (Silicibacter pomeroyi)).